The primary structure comprises 167 residues: MSSHVISLTVNGQAIERKVDSRTLLADFLRDELRLTGTHVGCEHGVCGACTIQFDGEPARSCLMLAVQAEGHSIRTVEALAVDGCLGALQQAFHEKHGLQCGFCTPGLLMTLDYALTADLHIDFSSDKEIRELISGNLCRCTGYQNIINAIKSVSPTTEIAKSEELV.

The 77-residue stretch at 4–80 (HVISLTVNGQ…GHSIRTVEAL (77 aa)) folds into the 2Fe-2S ferredoxin-type domain. Positions 42, 47, 50, and 62 each coordinate [2Fe-2S] cluster.

In terms of assembly, heterotrimer composed of an alpha (CdhA), a beta (CdhB) and a gamma (CdhC) subunit.

The catalysed reaction is caffeine + a ubiquinone + H2O = 1,3,7-trimethylurate + a ubiquinol. It carries out the reaction ubiquinone-0 + caffeine + H2O = ubiquinol-0 + 1,3,7-trimethylurate. The enzyme catalyses theobromine + a ubiquinone + H2O = 3,7-dimethylurate + a ubiquinol. Component of the caffeine dehydrogenase complex that catalyzes the hydrolytical oxidation of 1,3,7-trimethylxanthine (caffeine) by incorporation of an oxygen atom originating from a water molecule into position C-8 to produce 1,3,7-trimethyluric acid (TMU). Coenzyme Q0 (ubiquinone-0) is the preferred electron acceptor and, to a lesser extent, coenzyme Q2 (ubiquinone-2) can also be used, but oxygen and NAD(P)(+) cannot. Is involved in a caffeine degradation pathway that allows Pseudomonas sp. strain CBB1 to grow on caffeine as the sole carbon and nitrogen source. Is also active with theobromine as substrate, but shows a very poor activity with theophylline and is not active with xanthine, 3-methylxanthine, 7-methylxanthine, TMU, and 3,7-dimethylurate. The protein is Caffeine dehydrogenase subunit gamma of Pseudomonas sp. (strain CBB1).